We begin with the raw amino-acid sequence, 492 residues long: Cytochrome P450 2L1 (492 aa).

Heme is bound at residue C436.

It belongs to the cytochrome P450 family. Heme serves as cofactor.

It localises to the endoplasmic reticulum membrane. It is found in the microsome membrane. It catalyses the reaction an organic molecule + reduced [NADPH--hemoprotein reductase] + O2 = an alcohol + oxidized [NADPH--hemoprotein reductase] + H2O + H(+). Efficient in catalyzing the monooxygenation of benzphetamine, aminopyrine, benzo(a)pyrene, progesterone, and testosterone. In Panulirus argus (Caribbean spiny lobster), this protein is Cytochrome P450 2L1 (CYP2L1).